Reading from the N-terminus, the 284-residue chain is 4-diphosphocytidyl-2-C-methyl-D-erythritol kinase (284 aa).

K13 is an active-site residue. P96–S106 provides a ligand contact to ATP. The active site involves D138.

This sequence belongs to the GHMP kinase family. IspE subfamily.

It carries out the reaction 4-CDP-2-C-methyl-D-erythritol + ATP = 4-CDP-2-C-methyl-D-erythritol 2-phosphate + ADP + H(+). It participates in isoprenoid biosynthesis; isopentenyl diphosphate biosynthesis via DXP pathway; isopentenyl diphosphate from 1-deoxy-D-xylulose 5-phosphate: step 3/6. Its function is as follows. Catalyzes the phosphorylation of the position 2 hydroxy group of 4-diphosphocytidyl-2C-methyl-D-erythritol. The protein is 4-diphosphocytidyl-2-C-methyl-D-erythritol kinase of Chromobacterium violaceum (strain ATCC 12472 / DSM 30191 / JCM 1249 / CCUG 213 / NBRC 12614 / NCIMB 9131 / NCTC 9757 / MK).